The following is a 369-amino-acid chain: Transcription factor GTE6 (369 aa).

One can recognise a Bromo domain in the interval 89–198 (KRMQDLMRQF…EKFEEKWAHF (110 aa)). A coiled-coil region spans residues 201-263 (KVQEEEKIRE…VERCRKITIE (63 aa)). In terms of domain architecture, NET spans 250 to 331 (MRKVVERCRK…DALDNAMKKK (82 aa)). Positions 329-348 (KKKKEEETKTRELSGAQKKE) are enriched in basic and acidic residues. A disordered region spans residues 329–369 (KKKKEEETKTRELSGAQKKEVSKKRNATTKLAERKTKRSRI). Positions 351–368 (KKRNATTKLAERKTKRSR) match the Bipartite nuclear localization signal motif.

Abundantly expressed in flowers. Weakly expressed in roots, leaves and siliques; and undetectable in 5-day-old seedlings. In the basal rosette leaves of 21-day-old plants, it is more abundant in leaves 6 and 7, which possess narrow elliptical laminae, than in leaves 1-4, which have round laminae, suggesting a possible correlation between its expression and the formation of elliptical leaf laminae in mature leaves.

The protein localises to the nucleus. Functionally, regulates differences in leaf patterning between juvenile and mature leaves by controlling differences in the development of primordia produced during juvenile and mature phases. Acts by activating transcription of the myb-domain protein AS1, a gene involved in leaf-axis specification. Associates with the promoter and the start of the transcribed region of AS1 and up-regulates expression of AS1 through acetylation of histones H3 and H4. This chain is Transcription factor GTE6 (GTE6), found in Arabidopsis thaliana (Mouse-ear cress).